We begin with the raw amino-acid sequence, 172 residues long: Cell division protein SepF (172 aa).

Residues 16–78 (DGDEHYEPQP…RAASNRDDSS (63 aa)) form a disordered region. The segment covering 17–48 (GDEHYEPQPEGKQTRPAQKNEEYVDQEIRHTE) has biased composition (basic and acidic residues).

Belongs to the SepF family. Homodimer. Interacts with FtsZ.

The protein resides in the cytoplasm. Its function is as follows. Cell division protein that is part of the divisome complex and is recruited early to the Z-ring. Probably stimulates Z-ring formation, perhaps through the cross-linking of FtsZ protofilaments. Its function overlaps with FtsA. In Renibacterium salmoninarum (strain ATCC 33209 / DSM 20767 / JCM 11484 / NBRC 15589 / NCIMB 2235), this protein is Cell division protein SepF.